A 409-amino-acid chain; its full sequence is Gamma-glutamyl phosphate reductase (409 aa).

It belongs to the gamma-glutamyl phosphate reductase family.

The protein resides in the cytoplasm. The catalysed reaction is L-glutamate 5-semialdehyde + phosphate + NADP(+) = L-glutamyl 5-phosphate + NADPH + H(+). Its pathway is amino-acid biosynthesis; L-proline biosynthesis; L-glutamate 5-semialdehyde from L-glutamate: step 2/2. Catalyzes the NADPH-dependent reduction of L-glutamate 5-phosphate into L-glutamate 5-semialdehyde and phosphate. The product spontaneously undergoes cyclization to form 1-pyrroline-5-carboxylate. This is Gamma-glutamyl phosphate reductase from Koribacter versatilis (strain Ellin345).